We begin with the raw amino-acid sequence, 337 residues long: 6-phosphogluconolactonase (337 aa).

It belongs to the cycloisomerase 2 family.

The enzyme catalyses 6-phospho-D-glucono-1,5-lactone + H2O = 6-phospho-D-gluconate + H(+). It participates in carbohydrate degradation; pentose phosphate pathway; D-ribulose 5-phosphate from D-glucose 6-phosphate (oxidative stage): step 2/3. Functionally, catalyzes the hydrolysis of 6-phosphogluconolactone to 6-phosphogluconate. This is 6-phosphogluconolactonase from Blochmanniella pennsylvanica (strain BPEN).